We begin with the raw amino-acid sequence, 300 residues long: Protoheme IX farnesyltransferase (300 aa).

The next 9 helical transmembrane spans lie at 24 to 44 (VTQLAVFCAVIGMFLATPGMV), 48 to 68 (VLIGGTVGIWLLAGAAFAINC), 94 to 114 (PQILLFSAVLGSIGAWTLYTF), 118 to 138 (LTMWLTIATFVGYAVIYTLLL), 146 to 166 (IVIGGASGAMPPALGWAAVTG), 172 to 192 (AWILVLIIFVWTPPHFWVLAL), 217 to 237 (LHILLYTVILFAVTLMPFISG), 239 to 259 (SGAVYLTSAVLLGAVFLAYAW), and 278 to 298 (IVYLSLLFAALLVDHYARPLL).

Belongs to the UbiA prenyltransferase family. Protoheme IX farnesyltransferase subfamily.

Its subcellular location is the cell inner membrane. The catalysed reaction is heme b + (2E,6E)-farnesyl diphosphate + H2O = Fe(II)-heme o + diphosphate. Its pathway is porphyrin-containing compound metabolism; heme O biosynthesis; heme O from protoheme: step 1/1. In terms of biological role, converts heme B (protoheme IX) to heme O by substitution of the vinyl group on carbon 2 of heme B porphyrin ring with a hydroxyethyl farnesyl side group. The polypeptide is Protoheme IX farnesyltransferase (Burkholderia vietnamiensis (strain G4 / LMG 22486) (Burkholderia cepacia (strain R1808))).